The primary structure comprises 193 residues: Protein SPEAR3 (193 aa).

Disordered regions lie at residues 1 to 50 and 85 to 104; these read MGSS…GVAQ and GYPS…SSPP. The segment covering 14–26 has biased composition (low complexity); sequence SSSSSPTSSSSSP. An SPL motif is present at residues 44–52; the sequence is RGLGVAQLE. Residues 86–101 are compositionally biased toward low complexity; that stretch reads YPSIPSSSPSFSYASS. The EAR signature appears at 187-193; it reads LDLELRL.

As to quaternary structure, interacts with TPL and the TPR corepressors TPR1, TPR2, TPR3, TPR4, and with the TCP transcription factors TCP2, TCP3, TCP4, TCP5, TCP10, TCP13, TCP17 and TCP24. Interacts with SPL and SPEAR2. In terms of tissue distribution, expressed in shoot apical meristem, cotyledons and leaves. Detected at the leaf margins and in the vascular bundles at the base of the leaves.

The protein resides in the nucleus. Its function is as follows. Transcriptional regulator of leaf development. Acts as an adapter-like transcriptional repressor recruiting TPL/TPR corepressors to inhibit the CIN-like TCP transcription factors. This chain is Protein SPEAR3, found in Arabidopsis thaliana (Mouse-ear cress).